The chain runs to 703 residues: Polyribonucleotide nucleotidyltransferase (703 aa).

Mg(2+)-binding residues include Asp-486 and Asp-492. Positions 553–614 (PRITTIWIKP…AACDAAIQMI (62 aa)) constitute a KH domain. The 69-residue stretch at 624 to 692 (GKLYMGTVKK…KQGKIKLSRK (69 aa)) folds into the S1 motif domain.

It belongs to the polyribonucleotide nucleotidyltransferase family. Mg(2+) serves as cofactor.

The protein resides in the cytoplasm. It catalyses the reaction RNA(n+1) + phosphate = RNA(n) + a ribonucleoside 5'-diphosphate. In terms of biological role, involved in mRNA degradation. Catalyzes the phosphorolysis of single-stranded polyribonucleotides processively in the 3'- to 5'-direction. The sequence is that of Polyribonucleotide nucleotidyltransferase from Trichlorobacter lovleyi (strain ATCC BAA-1151 / DSM 17278 / SZ) (Geobacter lovleyi).